A 732-amino-acid chain; its full sequence is 1,4-alpha-glucan branching enzyme GlgB (732 aa).

Catalysis depends on Asp-408, which acts as the Nucleophile. The Proton donor role is filled by Glu-461.

The protein belongs to the glycosyl hydrolase 13 family. GlgB subfamily. As to quaternary structure, monomer.

It carries out the reaction Transfers a segment of a (1-&gt;4)-alpha-D-glucan chain to a primary hydroxy group in a similar glucan chain.. It participates in glycan biosynthesis; glycogen biosynthesis. In terms of biological role, catalyzes the formation of the alpha-1,6-glucosidic linkages in glycogen by scission of a 1,4-alpha-linked oligosaccharide from growing alpha-1,4-glucan chains and the subsequent attachment of the oligosaccharide to the alpha-1,6 position. This chain is 1,4-alpha-glucan branching enzyme GlgB, found in Rhodococcus jostii (strain RHA1).